Here is a 670-residue protein sequence, read N- to C-terminus: Zinc finger protein 233 (670 aa).

The KRAB domain occupies 8-79 (VTFKDVAVVF…ETEIQGDGCS (72 aa)). The segment at 258–280 (QTSDENGKGLSVGSNLELHQQLH) adopts a C2H2-type 1; degenerate zinc-finger fold. Residues 311-336 (EKCYRNGDSGEGFSQGSHLQPHQRVS) form a C2H2-type 2; degenerate zinc finger. Residues 342-364 (YRCQVYARSSNQNSCLPSHELTH) form a C2H2-type 3; degenerate zinc finger. Residues 370-392 (CTCGRCGKGFHHSLDFDIHCVDS) form a C2H2-type 4; degenerate zinc finger. Residues 398-420 (CKCDVYDKGFSQTSQLQAHQRGH) form a C2H2-type 5; degenerate zinc finger. 7 C2H2-type zinc fingers span residues 452-474 (YKCE…QRIH), 480-502 (YKCD…QRVH), 508-530 (YKCD…QRVH), 536-558 (YKCE…QQVH), 564-586 (YKCD…QRVH), 592-614 (YKCE…QRIH), and 620-642 (YKCG…QRVH).

Belongs to the krueppel C2H2-type zinc-finger protein family.

It is found in the nucleus. May be involved in transcriptional regulation. The sequence is that of Zinc finger protein 233 (ZNF233) from Homo sapiens (Human).